Reading from the N-terminus, the 306-residue chain is MPDYDLIAILGPTASGKTPFAAALAAELNTEIISADSRQIYRGMDLGTGKDLEDYTINGRQIPYHLIDIADPGYKYNVFEYQRDFLTAYETIKQKGCLPVLCGGTGLYLESVLKGYRLIPVPENQELRVRLAEKSLEELTAILSSYKTLHNSTDVDTVKRAIRAIEIEEYYAKTPIEEREFPQLNSLIIGVDIDRELRREKITRRLKQRLDDGMVEEVRRLLAEGIQPDDLIYYGLEYKYLTLYAIGKMTYDEMFTGLETAIHQFAKRQMTWFRGMERRGFTIHWVDASLPMEEKINFVKQKLKEF.

Position 11–18 (11–18 (GPTASGKT)) interacts with ATP. Residue 13 to 18 (TASGKT) coordinates substrate. Positions 36–39 (DSRQ) are interaction with substrate tRNA.

Belongs to the IPP transferase family. In terms of assembly, monomer. It depends on Mg(2+) as a cofactor.

It carries out the reaction adenosine(37) in tRNA + dimethylallyl diphosphate = N(6)-dimethylallyladenosine(37) in tRNA + diphosphate. Catalyzes the transfer of a dimethylallyl group onto the adenine at position 37 in tRNAs that read codons beginning with uridine, leading to the formation of N6-(dimethylallyl)adenosine (i(6)A). This chain is tRNA dimethylallyltransferase 2, found in Bacteroides fragilis (strain ATCC 25285 / DSM 2151 / CCUG 4856 / JCM 11019 / LMG 10263 / NCTC 9343 / Onslow / VPI 2553 / EN-2).